The following is a 221-amino-acid chain: Cytidylate kinase (221 aa).

11–19 (GPCGAGKST) contacts ATP.

It belongs to the cytidylate kinase family. Type 1 subfamily.

It localises to the cytoplasm. The catalysed reaction is CMP + ATP = CDP + ADP. It catalyses the reaction dCMP + ATP = dCDP + ADP. This Mycoplasmopsis agalactiae (strain NCTC 10123 / CIP 59.7 / PG2) (Mycoplasma agalactiae) protein is Cytidylate kinase.